The sequence spans 125 residues: Prefoldin subunit beta (125 aa).

This sequence belongs to the prefoldin subunit beta family. Heterohexamer of two alpha and four beta subunits.

It localises to the cytoplasm. Its function is as follows. Molecular chaperone capable of stabilizing a range of proteins. Seems to fulfill an ATP-independent, HSP70-like function in archaeal de novo protein folding. The polypeptide is Prefoldin subunit beta (Pyrobaculum calidifontis (strain DSM 21063 / JCM 11548 / VA1)).